Reading from the N-terminus, the 203-residue chain is MIGFLKFALIGTVLLGVANGASVATASAKGSNCTVQDGYAALMCLVRLSDFAEKVDNLDMNDKTKLKEFKRSCDSLHSCYSNLNCTTKSDDEKDKYVESIKQYCDAVVYVSDGFSKCSDKLNEKKSKCFDDWDPIPNKIHLEEDEAKIEKIKNEACKTYFGKDDCMKKEITETCGKEEWDSFRKQFVNLSGGLVSKCDFSRFE.

The N-terminal stretch at 1 to 20 (MIGFLKFALIGTVLLGVANG) is a signal peptide. N-linked (GlcNAc...) asparagine glycans are attached at residues Asn32, Asn84, and Asn188.

Belongs to the UPF0376 family.

It is found in the secreted. The polypeptide is Excretory canal abnormal exc-13 (Caenorhabditis elegans).